The sequence spans 387 residues: Peptostreptococcal albumin-binding protein (387 aa).

Positions 1 to 26 (MKLNKKLLMAALAGAIVVGGGVNTFA) are cleaved as a signal peptide. The disordered stretch occupies residues 122–155 (LFDKHELGGLGKDKGPGRFDENGWENNEHGYETR). The tract at residues 213-265 (TIDQWLLKNAKEDAIAELKKAGITSDFYFNAINKAKTVEEVNALKNEILKAHA) is GA module. A disordered region spans residues 266 to 360 (GKEVNPSTPE…EKAALPEAGR (95 aa)). Over residues 270–282 (NPSTPEVTPSVPQ) the composition is skewed to polar residues. Positions 298-360 (GTKEDGKKEN…EKAALPEAGR (63 aa)) are enriched in basic and acidic residues. The LPXTG sorting signal motif lies at 355–359 (LPEAG). Ala358 bears the Pentaglycyl murein peptidoglycan amidated alanine mark. A propeptide spans 359-387 (GRRKAEILTLAAASLSSVAGAFISLKKRK) (removed by sortase).

The protein localises to the secreted. It localises to the cell wall. Binds serum albumin. The chain is Peptostreptococcal albumin-binding protein (pab) from Finegoldia magna (Peptostreptococcus magnus).